The following is a 500-amino-acid chain: NAD(P)H-quinone oxidoreductase chain 4, chloroplastic (500 aa).

A run of 14 helical transmembrane segments spans residues 4-24, 37-57, 87-107, 111-131, 134-154, 167-187, 208-228, 242-262, 272-292, 305-325, 330-350, 386-406, 416-436, and 462-482; these read FPWLTIIVVFPILTGSLIFLL, LCICILELLLTTYTFCYHFQL, IGPILLTGFITTLATLAAWPV, AQLFHFLMLAMYSGQIGSFSS, LLLFFLMWEFELIPVYLLLSM, FILYTAGGSIFLLIGVLGIGL, ALEVIFYVGFLIAFAVKLPII, HYSTCMLLAGILLKMGAYGLV, AHCLFSPGLIIVGAIQIIYAA, IAYSSISHMGFIIIGIGSLSD, GAILQIISHGFIGAALFFLAG, LALPGLSGFVAELLVFFGIIT, ILIAFLMAIGMILTPIYSLSM, and LFVSISLLLPIIGIGIYPDFV.

It belongs to the complex I subunit 4 family.

It localises to the plastid. Its subcellular location is the chloroplast thylakoid membrane. The enzyme catalyses a plastoquinone + NADH + (n+1) H(+)(in) = a plastoquinol + NAD(+) + n H(+)(out). It catalyses the reaction a plastoquinone + NADPH + (n+1) H(+)(in) = a plastoquinol + NADP(+) + n H(+)(out). In Oenothera biennis (German evening primrose), this protein is NAD(P)H-quinone oxidoreductase chain 4, chloroplastic.